The primary structure comprises 211 residues: Small ribosomal subunit protein uS3c (211 aa).

In terms of domain architecture, KH type-2 spans 39 to 109 (IREFAESRLP…NVALYVTKTQ (71 aa)).

The protein belongs to the universal ribosomal protein uS3 family. As to quaternary structure, part of the 30S ribosomal subunit.

It localises to the plastid. It is found in the chloroplast. The sequence is that of Small ribosomal subunit protein uS3c (rps3) from Ostreococcus tauri.